Consider the following 210-residue polypeptide: Cyclin-U1-1 (210 aa).

The protein belongs to the cyclin family. Cyclin U/P subfamily. As to quaternary structure, interacts with CDKA-1. Expressed in roots and flowers. Expressed in the shoot apex, leaf primordia and young leaves.

This is Cyclin-U1-1 (CYCU1-1) from Arabidopsis thaliana (Mouse-ear cress).